We begin with the raw amino-acid sequence, 956 residues long: Run domain Beclin-1-interacting and cysteine-rich domain-containing protein (956 aa).

In terms of domain architecture, RUN spans 49–190 (WSKYGGLERL…PRLLAQIDAS (142 aa)). An interaction with PIK3C3 region spans residues 50 to 181 (SKYGGLERLC…CLEAVEQNNP (132 aa)). Serine 198 is subject to Phosphoserine. The interval 205–437 (SQSLTALPGS…ITIIVEDPIA (233 aa)) is interaction with YWHAB. Residues 233-242 (SLQSMPQSSH) are compositionally biased toward low complexity. Residues 233-423 (SLQSMPQSSH…TNIASRGAAG (191 aa)) are disordered. Residues serine 250 and serine 268 each carry the phosphoserine modification. Over residues 270–319 (AETQTTPAPLPSDSTLAQDSPLTAQEMSDSTLTSPLEASWVSSQNDSPSD) the composition is skewed to polar residues. Residues 302-585 (TSPLEASWVS…DLEIQDADIR (284 aa)) are interaction with UVRAG. Positions 339–371 (ASCESHSSNGESSSSHLFSSSSSQKLESAASSL) are enriched in low complexity. The segment covering 379-395 (QSQAGSVLRRSSFSEGQ) has biased composition (polar residues). 4 positions are modified to phosphoserine: serine 390, serine 412, serine 513, and serine 547. The segment at 490–542 (AIELMKCNMMSQCLEEEEVEEEDSDREIQELKQKIRLRRQQIRTKNLLPAYRE) is interaction with BECN1. Residues 547–566 (SFRVTSSSSQFSSRDSTQLS) are compositionally biased toward low complexity. Positions 547–579 (SFRVTSSSSQFSSRDSTQLSESGSAEDADDLEI) are disordered. The interval 552 to 609 (SSSSQFSSRDSTQLSESGSAEDADDLEIQDADIRRSAVSNGKSSFSQNLSHCFLHSTS) is interaction with CYBA. Residues 570-579 (SAEDADDLEI) are compositionally biased toward acidic residues. Serine 655 is modified (phosphoserine). Positions 656–744 (PDDGQHADIY…HENAQMVVPS (89 aa)) are interaction with CARD9. Residues 705–956 (CAGCGIRTDP…ALEATVLETT (252 aa)) are interaction with Rab7.

Associates with PI3K (PI3KC3/PI3K-III/class III phosphatidylinositol 3-kinase) complex II (PI3KC3-C2) in which the core composed of the catalytic subunit PIK3C3, the regulatory subunit PIK3R4 and BECN1 is associated with UVRAG; in the complex interacts directly with PI3KC3 and UVRAG. Interacts with Rab7 (RAB7A or RAB7B) (GTP-bound form); Rab7 and UVRAG compete for RUBCN binding; can interact simultaneously with Rab7 and the PI3K complex. Interacts with CYBA and CYBB; indicative for the association with the CYBA:CYBB NADPH oxidase heterodimer. Interacts with NOX4 and probably associates with the CYBA:NOX4 complex. Interacts with YWHAB and CARD9 in a competitive and stimulation-dependent manner; RUBCN exchanges interaction from YWHAB to CARD9 upon stimulation with beta-1,3-glucan.

The protein localises to the late endosome. The protein resides in the lysosome. It is found in the early endosome. In terms of biological role, inhibits PIK3C3 activity; under basal conditions negatively regulates PI3K complex II (PI3KC3-C2) function in autophagy. Negatively regulates endosome maturation and degradative endocytic trafficking and impairs autophagosome maturation process. Can sequester UVRAG from association with a class C Vps complex (possibly the HOPS complex) and negatively regulates Rab7 activation. Functionally, involved in regulation of pathogen-specific host defense of activated macrophages. Following bacterial infection promotes NADH oxidase activity by association with CYBA thereby affecting TLR2 signaling and probably other TLR-NOX pathways. Stabilizes the CYBA:CYBB NADPH oxidase heterodimer, increases its association with TLR2 and its phagosome trafficking to induce antimicrobial burst of ROS and production of inflammatory cytokines. Following fungal or viral infection (implicating CLEC7A (dectin-1)-mediated myeloid cell activation or RIGI-dependent sensing of RNA viruses) negatively regulates pro-inflammatory cytokine production by association with CARD9 and sequestering it from signaling complexes. This Mus musculus (Mouse) protein is Run domain Beclin-1-interacting and cysteine-rich domain-containing protein.